A 452-amino-acid polypeptide reads, in one-letter code: Pup--protein ligase (452 aa).

E9 lines the Mg(2+) pocket. ATP is bound at residue R53. Y55 is a binding site for Mg(2+). The Proton acceptor role is filled by D57. Position 63 (E63) interacts with Mg(2+). ATP contacts are provided by T66 and W419.

Belongs to the Pup ligase/Pup deamidase family. Pup-conjugating enzyme subfamily.

The catalysed reaction is ATP + [prokaryotic ubiquitin-like protein]-L-glutamate + [protein]-L-lysine = ADP + phosphate + N(6)-([prokaryotic ubiquitin-like protein]-gamma-L-glutamyl)-[protein]-L-lysine.. It participates in protein degradation; proteasomal Pup-dependent pathway. The protein operates within protein modification; protein pupylation. In terms of biological role, catalyzes the covalent attachment of the prokaryotic ubiquitin-like protein modifier Pup to the proteasomal substrate proteins, thereby targeting them for proteasomal degradation. This tagging system is termed pupylation. The ligation reaction involves the side-chain carboxylate of the C-terminal glutamate of Pup and the side-chain amino group of a substrate lysine. This is Pup--protein ligase from Salinispora arenicola (strain CNS-205).